The primary structure comprises 396 residues: MQNMVILGATGSIGASTLSVISANPDAYRVYALVANASVDKMLALCVTHRPQVAHMVDSQAALALQAKLPPELNIQVTSGEDELIALVTATEVDTVMAAIVGAAGLVPTLAAVKAGKRVLLANKEALVMSGELFIEATKASGATLLPVDSEHNAIFQCLPEEVQANLGRCDLAASGISHILLTGSGGPFLTAELASLASMTPAQACKHPNWSMGPKISVDSATMMNKGLEFIEARWLFNTQKDQLKVVIHPQSVIHSMVQYRDGSVIAQMGNPDMRTPIAHCMSYPQRIRSGVEPLDFFKVGQLSFCEPDFNRFPCLALAIAACAQGQEATTVLNAANEIAVEAFLQGQIGFTHIAKVNEACLSSVPKRAMTSIDDIIALDAQTRIYAREQLAKFA.

NADPH is bound by residues Thr10, Gly11, Ser12, Ile13, and Asn123. Residue Lys124 coordinates 1-deoxy-D-xylulose 5-phosphate. Glu125 contacts NADPH. Asp149 serves as a coordination point for Mn(2+). 4 residues coordinate 1-deoxy-D-xylulose 5-phosphate: Ser150, Glu151, Ser185, and His208. Residue Glu151 coordinates Mn(2+). Gly214 contacts NADPH. 1-deoxy-D-xylulose 5-phosphate-binding residues include Ser221, Asn226, Lys227, and Glu230. Glu230 lines the Mn(2+) pocket.

It belongs to the DXR family. Mg(2+) serves as cofactor. The cofactor is Mn(2+).

It carries out the reaction 2-C-methyl-D-erythritol 4-phosphate + NADP(+) = 1-deoxy-D-xylulose 5-phosphate + NADPH + H(+). The protein operates within isoprenoid biosynthesis; isopentenyl diphosphate biosynthesis via DXP pathway; isopentenyl diphosphate from 1-deoxy-D-xylulose 5-phosphate: step 1/6. Catalyzes the NADPH-dependent rearrangement and reduction of 1-deoxy-D-xylulose-5-phosphate (DXP) to 2-C-methyl-D-erythritol 4-phosphate (MEP). This is 1-deoxy-D-xylulose 5-phosphate reductoisomerase from Shewanella sp. (strain ANA-3).